The following is a 99-amino-acid chain: MSDLCGGLPPDICEQLTKEEQFIKIKVEKRRYGKEVTIVEGISNDETELKKIASELKSKLAAGGTVKNGKIELQGDHRDRVKELLIKMGFPESNILVIE.

It belongs to the SUI1 family.

This Sulfolobus acidocaldarius (strain ATCC 33909 / DSM 639 / JCM 8929 / NBRC 15157 / NCIMB 11770) protein is Protein translation factor SUI1 homolog.